Reading from the N-terminus, the 235-residue chain is Purine nucleoside phosphorylase DeoD-type (235 aa).

His4 is a binding site for a purine D-ribonucleoside. Phosphate contacts are provided by residues Gly20, Arg24, Arg43, and 87-90 (RVGT). A purine D-ribonucleoside contacts are provided by residues 179-181 (EME) and 203-204 (SN).

This sequence belongs to the PNP/UDP phosphorylase family. As to quaternary structure, homohexamer; trimer of homodimers.

The catalysed reaction is a purine D-ribonucleoside + phosphate = a purine nucleobase + alpha-D-ribose 1-phosphate. It catalyses the reaction a purine 2'-deoxy-D-ribonucleoside + phosphate = a purine nucleobase + 2-deoxy-alpha-D-ribose 1-phosphate. Catalyzes the reversible phosphorolytic breakdown of the N-glycosidic bond in the beta-(deoxy)ribonucleoside molecules, with the formation of the corresponding free purine bases and pentose-1-phosphate. This Levilactobacillus brevis (strain ATCC 367 / BCRC 12310 / CIP 105137 / JCM 1170 / LMG 11437 / NCIMB 947 / NCTC 947) (Lactobacillus brevis) protein is Purine nucleoside phosphorylase DeoD-type.